An 888-amino-acid polypeptide reads, in one-letter code: Bifunctional uridylyltransferase/uridylyl-removing enzyme (888 aa).

Positions 1–348 (MATTTDKQVS…YHFAEDKIEP (348 aa)) are uridylyltransferase. Residues 349 to 709 (INPRFRIINN…LQPTTSRGAT (361 aa)) form a uridylyl-removing region. Residues 468 to 590 (VDEHTILVIR…VGTQQRLDYL (123 aa)) enclose the HD domain. ACT domains are found at residues 710 to 787 (ELII…DDTM) and 817 to 888 (ELSI…NIEQ).

It belongs to the GlnD family. Mg(2+) is required as a cofactor.

It catalyses the reaction [protein-PII]-L-tyrosine + UTP = [protein-PII]-uridylyl-L-tyrosine + diphosphate. The catalysed reaction is [protein-PII]-uridylyl-L-tyrosine + H2O = [protein-PII]-L-tyrosine + UMP + H(+). Uridylyltransferase (UTase) activity is inhibited by glutamine, while glutamine activates uridylyl-removing (UR) activity. In terms of biological role, modifies, by uridylylation and deuridylylation, the PII regulatory proteins (GlnB and homologs), in response to the nitrogen status of the cell that GlnD senses through the glutamine level. Under low glutamine levels, catalyzes the conversion of the PII proteins and UTP to PII-UMP and PPi, while under higher glutamine levels, GlnD hydrolyzes PII-UMP to PII and UMP (deuridylylation). Thus, controls uridylylation state and activity of the PII proteins, and plays an important role in the regulation of nitrogen assimilation and metabolism. This is Bifunctional uridylyltransferase/uridylyl-removing enzyme from Hydrogenovibrio crunogenus (strain DSM 25203 / XCL-2) (Thiomicrospira crunogena).